Reading from the N-terminus, the 126-residue chain is C-type natriuretic peptide (126 aa).

Residues 1–23 form the signal peptide; the sequence is MHLSQLLACALLLTLLSLRPSEA. The segment at 19-72 is disordered; that stretch reads RPSEAKPGAPPKVPRTPPGEEVAEPQAAGGGQKKGDKTPGGGGANLKGDRSRLL. A propeptide spanning residues 24–73 is cleaved from the precursor; the sequence is KPGAPPKVPRTPPGEEVAEPQAAGGGQKKGDKTPGGGGANLKGDRSRLLR. A compositionally biased stretch (pro residues) spans 26–35; it reads GAPPKVPRTP. The segment covering 46-63 has biased composition (gly residues); the sequence is AGGGQKKGDKTPGGGGAN. An intrachain disulfide couples cysteine 110 to cysteine 126.

It belongs to the natriuretic peptide family. In terms of processing, degraded by IDE (in vitro).

Its subcellular location is the secreted. Its function is as follows. Hormone which plays a role in endochondral ossification through regulation of cartilaginous growth plate chondrocytes proliferation and differentiation. May also be vasoactive and natriuretic. Acts by specifically binding and stimulating NPR2 to produce cGMP. Binds the clearance receptor NPR3. The chain is C-type natriuretic peptide (NPPC) from Sus scrofa (Pig).